A 384-amino-acid chain; its full sequence is Cytochrome b (384 aa).

4 helical membrane-spanning segments follow: residues L32–M52, W76–G98, V113–C133, and F179–M199. Positions 82 and 96 each coordinate heme b. H183 and H197 together coordinate heme b. H202 contributes to the a ubiquinone binding site. Helical transmembrane passes span F225 to F245, L289 to D309, L321 to E341, and F348 to P368.

This sequence belongs to the cytochrome b family. In terms of assembly, fungal cytochrome b-c1 complex contains 10 subunits; 3 respiratory subunits, 2 core proteins and 5 low-molecular weight proteins. Cytochrome b-c1 complex is a homodimer. The cofactor is heme b.

It localises to the mitochondrion inner membrane. Its function is as follows. Component of the ubiquinol-cytochrome c reductase complex (complex III or cytochrome b-c1 complex) that is part of the mitochondrial respiratory chain. The b-c1 complex mediates electron transfer from ubiquinol to cytochrome c. Contributes to the generation of a proton gradient across the mitochondrial membrane that is then used for ATP synthesis. In Eremothecium gossypii (strain ATCC 10895 / CBS 109.51 / FGSC 9923 / NRRL Y-1056) (Yeast), this protein is Cytochrome b (COB).